Reading from the N-terminus, the 346-residue chain is Ribonucleoside-diphosphate reductase subunit beta (346 aa).

Residues Glu89, Glu120, and His123 each contribute to the Fe cation site. Residue Tyr129 is part of the active site. Glu193, Glu227, and His230 together coordinate Fe cation.

It belongs to the ribonucleoside diphosphate reductase small chain family. Tetramer of two alpha and two beta subunits. Requires Fe cation as cofactor.

It catalyses the reaction a 2'-deoxyribonucleoside 5'-diphosphate + [thioredoxin]-disulfide + H2O = a ribonucleoside 5'-diphosphate + [thioredoxin]-dithiol. Provides the precursors necessary for DNA synthesis. Catalyzes the biosynthesis of deoxyribonucleotides from the corresponding ribonucleotides. In Chlamydia trachomatis serovar D (strain ATCC VR-885 / DSM 19411 / UW-3/Cx), this protein is Ribonucleoside-diphosphate reductase subunit beta (nrdB).